The following is a 799-amino-acid chain: LPS-assembly protein LptD (799 aa).

Residues 1 to 34 form the signal peptide; the sequence is MMHELDLRPHLARFAQRPLALLAWALLQGTSVNA.

Belongs to the LptD family. In terms of assembly, component of the lipopolysaccharide transport and assembly complex. Interacts with LptE and LptA.

Its subcellular location is the cell outer membrane. Together with LptE, is involved in the assembly of lipopolysaccharide (LPS) at the surface of the outer membrane. In Albidiferax ferrireducens (strain ATCC BAA-621 / DSM 15236 / T118) (Rhodoferax ferrireducens), this protein is LPS-assembly protein LptD.